The sequence spans 342 residues: tRNA-specific 2-thiouridylase MnmA (342 aa).

ATP-binding positions include 6 to 13 (LLSGGVDS) and Leu-32. Cys-92 (nucleophile) is an active-site residue. Cysteines 92 and 191 form a disulfide. Gly-116 contacts ATP. Positions 138 to 140 (KDQ) are interaction with tRNA. Cys-191 serves as the catalytic Cysteine persulfide intermediate. Positions 293-294 (RY) are interaction with tRNA.

The protein belongs to the MnmA/TRMU family.

It localises to the cytoplasm. It carries out the reaction S-sulfanyl-L-cysteinyl-[protein] + uridine(34) in tRNA + AH2 + ATP = 2-thiouridine(34) in tRNA + L-cysteinyl-[protein] + A + AMP + diphosphate + H(+). In terms of biological role, catalyzes the 2-thiolation of uridine at the wobble position (U34) of tRNA, leading to the formation of s(2)U34. The polypeptide is tRNA-specific 2-thiouridylase MnmA (Helicobacter acinonychis (strain Sheeba)).